The sequence spans 688 residues: Protein adenylyltransferase SelO, mitochondrial (688 aa).

The transit peptide at 1–23 (MGEKRTIIKALKNSAASHFIKKL) directs the protein to the mitochondrion. Gly132, Gly134, Arg135, Lys156, Asp168, Gly169, Arg220, and Arg227 together coordinate ATP. The Proton acceptor role is filled by Asp338. Residues Asn339 and Asp348 each contribute to the Mg(2+) site. Asp348 contacts ATP.

It belongs to the SELO family. Requires Mg(2+) as cofactor. Post-translationally, forms probably one or more intrachain disulfide bridges.

The protein localises to the mitochondrion. The enzyme catalyses L-tyrosyl-[protein] + ATP = O-(5'-adenylyl)-L-tyrosyl-[protein] + diphosphate. Its function is as follows. Catalyzes the transfer of adenosine 5'-monophosphate (AMP) to Tyr residues of target mitochondrial proteins (AMPylation). Involved in redox homeostasis by regulating the cellular response to oxidative stress. Regulates protein S-glutathionylation levels possibly by AMPylation of deglutathionylation enzymes such as glutaredoxins. This is Protein adenylyltransferase SelO, mitochondrial from Saccharomyces cerevisiae (strain ATCC 204508 / S288c) (Baker's yeast).